A 201-amino-acid chain; its full sequence is Recombination protein RecR (201 aa).

A C4-type zinc finger spans residues 60–75 (CSVCGNVDTTDPCSIC). The region spanning 83-178 (TTIIVVEDVA…KITRLAHGVP (96 aa)) is the Toprim domain.

Belongs to the RecR family.

Functionally, may play a role in DNA repair. It seems to be involved in an RecBC-independent recombinational process of DNA repair. It may act with RecF and RecO. This is Recombination protein RecR from Bartonella quintana (strain Toulouse) (Rochalimaea quintana).